A 1288-amino-acid polypeptide reads, in one-letter code: Mitogen-activated protein kinase kinase kinase 6 (1288 aa).

The Protein kinase domain occupies 648-906 (TGERLVLGKG…AQTLLGDPFL (259 aa)). Residues 654–662 (LGKGTYGVV) and lysine 677 contribute to the ATP site. Aspartate 771 serves as the catalytic Proton acceptor. Residue threonine 806 is modified to Phosphothreonine. Residues 899-997 (TLLGDPFLQP…SSGLSLLHQE (99 aa)) form a disordered region. Over residues 914 to 952 (SPSSPRHAPRPSDAPSASPTPSANSTTQSQTFPCPQAPS) the composition is skewed to low complexity. 2 positions are modified to phosphoserine: serine 964 and serine 984. A compositionally biased stretch (low complexity) spans 980-989 (EEPASPEESS). Positions 1004-1029 (LAAVLEQELPALAENLHQEQKQEQGA) form a coiled coil. Residues 1123-1134 (VEKEAVSPRSEE) show a composition bias toward basic and acidic residues. Positions 1123 to 1157 (VEKEAVSPRSEELSNEGDSQQSPGQQSPLPVEPEQ) are disordered. A phosphoserine mark is found at serine 1129 and serine 1149. A compositionally biased stretch (low complexity) spans 1141-1151 (SQQSPGQQSPL). Positions 1166–1205 (LSLLRAETDRLREILAGKEREYQALVQRALQRLNEEARTY) form a coiled coil.

This sequence belongs to the protein kinase superfamily. STE Ser/Thr protein kinase family. MAP kinase kinase kinase subfamily. As to quaternary structure, binds both upstream activators and downstream substrates in multimolecular complexes. The cofactor is Mg(2+).

It catalyses the reaction L-seryl-[protein] + ATP = O-phospho-L-seryl-[protein] + ADP + H(+). It carries out the reaction L-threonyl-[protein] + ATP = O-phospho-L-threonyl-[protein] + ADP + H(+). With respect to regulation, activated by phosphorylation on Thr-806. Catalytically active only when complexed with MAP3K5, with MAP3K5 supporting the stability and the active configuration of MAP3K6 and MAP3K6 activating MAP3K5 by direct phosphorylation. Functionally, component of a protein kinase signal transduction cascade. Activates the JNK, but not ERK or p38 kinase pathways. The polypeptide is Mitogen-activated protein kinase kinase kinase 6 (MAP3K6) (Homo sapiens (Human)).